Consider the following 523-residue polypeptide: 2-isopropylmalate synthase (523 aa).

The region spanning 5–267 is the Pyruvate carboxyltransferase domain; it reads VVIFDTTLRD…QTRINHNEIW (263 aa). Mn(2+)-binding residues include Asp14, His202, His204, and Asn238. The interval 392–523 is regulatory domain; the sequence is RMDYFSVQSG…QNKENNKETV (132 aa).

It belongs to the alpha-IPM synthase/homocitrate synthase family. LeuA type 1 subfamily. Homodimer. The cofactor is Mn(2+).

Its subcellular location is the cytoplasm. It carries out the reaction 3-methyl-2-oxobutanoate + acetyl-CoA + H2O = (2S)-2-isopropylmalate + CoA + H(+). Its pathway is amino-acid biosynthesis; L-leucine biosynthesis; L-leucine from 3-methyl-2-oxobutanoate: step 1/4. Catalyzes the condensation of the acetyl group of acetyl-CoA with 3-methyl-2-oxobutanoate (2-ketoisovalerate) to form 3-carboxy-3-hydroxy-4-methylpentanoate (2-isopropylmalate). The sequence is that of 2-isopropylmalate synthase from Enterobacter sp. (strain 638).